The primary structure comprises 1247 residues: ABC transporter B family member 14 (1247 aa).

The ABC transmembrane type-1 1 domain maps to 48-337 (MFLGGLGTCI…AVPSLSAISK (290 aa)). 6 consecutive transmembrane segments (helical) span residues 49–69 (FLGG…FVFF), 95–115 (LYLV…VACW), 172–192 (HVLR…LSVW), 196–216 (LLTL…AIVM), 277–297 (LGVG…FWYA), and 315–335 (ILNV…LSAI). N-linked (GlcNAc...) asparagine glycosylation is found at Asn362 and Asn392. An ABC transporter 1 domain is found at 373-608 (IEFCGVSFAY…GGDYATLVNC (236 aa)). 407-414 (GPSGSGKS) is a binding site for ATP. One can recognise an ABC transmembrane type-1 2 domain in the interval 679–971 (EWLYALLGSI…TLALTPDIVK (293 aa)). Transmembrane regions (helical) follow at residues 680-700 (WLYA…PALF) and 727-747 (AIIF…QHYF). Asn780 is a glycosylation site (N-linked (GlcNAc...) asparagine). 3 helical membrane passes run 807 to 824 (IVQN…AFFY), 830 to 850 (AVVT…QLFL), and 915 to 935 (LSQC…SVLI). An N-linked (GlcNAc...) asparagine glycan is attached at Asn938. The chain crosses the membrane as a helical span at residues 949–969 (FMVLLVTAYSVAETLALTPDI). In terms of domain architecture, ABC transporter 2 spans 1006-1242 (IEFRNVSFAY…SDGFYKKLTS (237 aa)). N-linked (GlcNAc...) asparagine glycosylation is present at Asn1010. An ATP-binding site is contributed by 1041–1048 (GPSGSGKS). Asn1108 is a glycosylation site (N-linked (GlcNAc...) asparagine).

The protein belongs to the ABC transporter superfamily. ABCB family. Multidrug resistance exporter (TC 3.A.1.201) subfamily.

Its subcellular location is the membrane. The sequence is that of ABC transporter B family member 14 (ABCB14) from Arabidopsis thaliana (Mouse-ear cress).